We begin with the raw amino-acid sequence, 436 residues long: Ribulose bisphosphate carboxylase large chain (436 aa).

At Lys-4 the chain carries N6,N6,N6-trimethyllysine. Substrate contacts are provided by Asn-113 and Thr-163. The Proton acceptor role is filled by Lys-165. Residue Lys-167 participates in substrate binding. Mg(2+)-binding residues include Lys-191, Asp-193, and Glu-194. At Lys-191 the chain carries N6-carboxylysine. His-284 functions as the Proton acceptor in the catalytic mechanism. Substrate contacts are provided by Arg-285, His-317, and Ser-369.

Belongs to the RuBisCO large chain family. Type I subfamily. As to quaternary structure, heterohexadecamer of 8 large chains and 8 small chains; disulfide-linked. The disulfide link is formed within the large subunit homodimers. Requires Mg(2+) as cofactor. The disulfide bond which can form in the large chain dimeric partners within the hexadecamer appears to be associated with oxidative stress and protein turnover.

It localises to the plastid. Its subcellular location is the chloroplast. It catalyses the reaction 2 (2R)-3-phosphoglycerate + 2 H(+) = D-ribulose 1,5-bisphosphate + CO2 + H2O. The catalysed reaction is D-ribulose 1,5-bisphosphate + O2 = 2-phosphoglycolate + (2R)-3-phosphoglycerate + 2 H(+). Its function is as follows. RuBisCO catalyzes two reactions: the carboxylation of D-ribulose 1,5-bisphosphate, the primary event in carbon dioxide fixation, as well as the oxidative fragmentation of the pentose substrate in the photorespiration process. Both reactions occur simultaneously and in competition at the same active site. This chain is Ribulose bisphosphate carboxylase large chain, found in Sanguinaria canadensis (Bloodroot).